The sequence spans 404 residues: MMFVTGIVLFALAILISVALHECGHMWVARRTGMKVRRYFVGFGPTLWSTRRGETEYGVKAVPLGGFCDIAGMTPVEELDPDERDRAMYKQATWKRVAVLFAGPGMNLAICLVLIYAIALVWGLPNLHPPTRAVIGETGCVAQEVSQGKLEQCTGPGPAALAGIRSGDVVVKVGDTPVSSFDEMAAAVRKSHGSVPIVVERDGTAIVTYVDIESTQRWIPNGQGGELQPATVGAIGVGAARVGPVRYGVFSAMPATFAFTGDLTVEVGKALAALPTKVGALVRAIGGGQRDPQTPISVVGASIIGGDTVDHGLWVAFWFFLAQLNLILATINLLPLLPFDGGHIAVAVFERIRNMVRSARGKVAAAPVNYLKLLPATYVVLVLVVGYMLLTVTADLVNPIRLFQ.

A helical transmembrane segment spans residues 1–21 (MMFVTGIVLFALAILISVALH). Zn(2+) is bound at residue histidine 21. Glutamate 22 is a catalytic residue. Residue histidine 25 participates in Zn(2+) binding. A helical transmembrane segment spans residues 104 to 124 (PGMNLAICLVLIYAIALVWGL). Residues 121–203 (VWGLPNLHPP…SVPIVVERDG (83 aa)) form the PDZ domain. Zn(2+) is bound at residue aspartate 202. 2 helical membrane passes run 313-333 (LWVAFWFFLAQLNLILATINL) and 373-393 (LLPATYVVLVLVVGYMLLTVT).

This sequence belongs to the peptidase M50B family. Zn(2+) is required as a cofactor.

It is found in the cell membrane. A probable intramembrane site-2 protease (S2P) that cleaves type-2 transmembrane proteins within their membrane-spanning domains. Cleaves PbpB (PBP3, FtsI); cleavage is inhibited by Wag31-PbpB interaction. Probably also cleaves anti-sigma factors RskA, RslA and RsmA. Functionally, regulated intramembrane proteolysis (RIP) occurs when an extracytoplasmic signal (possibly oxidative stress) triggers a concerted proteolytic cascade to transmit information and elicit cellular responses. The membrane-spanning regulatory substrate protein (includes anti-sigma factors RskA, RslA, RsmA, and PbpB in M.tuberculosis) is first cut extracytoplasmically (site-1 protease, S1P), then within the membrane itself (site-2 protease, S2P, this entry), while cytoplasmic proteases finish degrading the regulatory protein, liberating the effector protein (ECF sigma factors SigK, SigL and SigM). The protein is Zinc metalloprotease Rip1 (rip1) of Mycobacterium bovis (strain BCG / Pasteur 1173P2).